A 438-amino-acid chain; its full sequence is Ribosomal protein uS12 methylthiotransferase RimO (438 aa).

The MTTase N-terminal domain occupies 4 to 114 (PRVSFVSLGC…VMNAVHEVAP (111 aa)). Residues C13, C49, C78, C146, C150, and C153 each coordinate [4Fe-4S] cluster. The 239-residue stretch at 132-370 (LTPRHYAYLK…MAKQQQISTN (239 aa)) folds into the Radical SAM core domain. The TRAM domain maps to 373-438 (KKKVGKRLPV…DAYDLHGTAV (66 aa)).

The protein belongs to the methylthiotransferase family. RimO subfamily. The cofactor is [4Fe-4S] cluster.

It localises to the cytoplasm. The catalysed reaction is L-aspartate(89)-[ribosomal protein uS12]-hydrogen + (sulfur carrier)-SH + AH2 + 2 S-adenosyl-L-methionine = 3-methylsulfanyl-L-aspartate(89)-[ribosomal protein uS12]-hydrogen + (sulfur carrier)-H + 5'-deoxyadenosine + L-methionine + A + S-adenosyl-L-homocysteine + 2 H(+). In terms of biological role, catalyzes the methylthiolation of an aspartic acid residue of ribosomal protein uS12. This chain is Ribosomal protein uS12 methylthiotransferase RimO, found in Brucella ovis (strain ATCC 25840 / 63/290 / NCTC 10512).